Consider the following 446-residue polypeptide: Tubulin beta chain (446 aa).

8 residues coordinate GTP: Q11, E69, S138, G142, T143, G144, N204, and N226. E69 contacts Mg(2+). The tract at residues 425–446 (YQEASISEGEEEYPEEVSNEEE) is disordered. Over residues 432–446 (EGEEEYPEEVSNEEE) the composition is skewed to acidic residues.

This sequence belongs to the tubulin family. In terms of assembly, dimer of alpha and beta chains. A typical microtubule is a hollow water-filled tube with an outer diameter of 25 nm and an inner diameter of 15 nM. Alpha-beta heterodimers associate head-to-tail to form protofilaments running lengthwise along the microtubule wall with the beta-tubulin subunit facing the microtubule plus end conferring a structural polarity. Microtubules usually have 13 protofilaments but different protofilament numbers can be found in some organisms and specialized cells. The cofactor is Mg(2+).

Its subcellular location is the cytoplasm. It localises to the cytoskeleton. Its function is as follows. Tubulin is the major constituent of microtubules, a cylinder consisting of laterally associated linear protofilaments composed of alpha- and beta-tubulin heterodimers. Microtubules grow by the addition of GTP-tubulin dimers to the microtubule end, where a stabilizing cap forms. Below the cap, tubulin dimers are in GDP-bound state, owing to GTPase activity of alpha-tubulin. The protein is Tubulin beta chain (TUB2) of Blumeria hordei (Barley powdery mildew).